The primary structure comprises 177 residues: Large ribosomal subunit protein uL6 (177 aa).

It belongs to the universal ribosomal protein uL6 family. In terms of assembly, part of the 50S ribosomal subunit.

Functionally, this protein binds to the 23S rRNA, and is important in its secondary structure. It is located near the subunit interface in the base of the L7/L12 stalk, and near the tRNA binding site of the peptidyltransferase center. The polypeptide is Large ribosomal subunit protein uL6 (Serratia proteamaculans (strain 568)).